The chain runs to 234 residues: Urease accessory protein UreG 1 (234 aa).

A disordered region spans residues 1 to 29; that stretch reads MTRTPTGVPMHLGHTHDAPAAVSADATRP. 42-49 contributes to the GTP binding site; sequence GPVGSGKT.

Belongs to the SIMIBI class G3E GTPase family. UreG subfamily. As to quaternary structure, homodimer. UreD, UreF and UreG form a complex that acts as a GTP-hydrolysis-dependent molecular chaperone, activating the urease apoprotein by helping to assemble the nickel containing metallocenter of UreC. The UreE protein probably delivers the nickel.

It is found in the cytoplasm. Functionally, facilitates the functional incorporation of the urease nickel metallocenter. This process requires GTP hydrolysis, probably effectuated by UreG. This chain is Urease accessory protein UreG 1, found in Streptomyces griseus subsp. griseus (strain JCM 4626 / CBS 651.72 / NBRC 13350 / KCC S-0626 / ISP 5235).